A 326-amino-acid polypeptide reads, in one-letter code: Malate dehydrogenase (326 aa).

12–18 (GGTGQIA) lines the NAD(+) pocket. Residues Arg-93 and Arg-99 each coordinate substrate. Residues Asn-106, Gln-113, and 130–132 (VGN) each bind NAD(+). Residues Asn-132 and Arg-163 each contribute to the substrate site. The active-site Proton acceptor is the His-188.

Belongs to the LDH/MDH superfamily. MDH type 2 family.

It catalyses the reaction (S)-malate + NAD(+) = oxaloacetate + NADH + H(+). Catalyzes the reversible oxidation of malate to oxaloacetate. The chain is Malate dehydrogenase from Chlamydia trachomatis serovar L2 (strain ATCC VR-902B / DSM 19102 / 434/Bu).